Consider the following 551-residue polypeptide: E3 ubiquitin-protein ligase TRIM8 (551 aa).

The segment at 15–56 (CPICLHVFVEPVQLPCKHNFCRGCIGEAWAKDSGLVRCPECN) adopts an RING-type zinc-finger fold. 2 B box-type zinc fingers span residues 92 to 132 (CVFC…ARGH) and 140 to 182 (VRAW…VCDV). Coiled coils occupy residues 181–249 (DVEI…DLRQ) and 274–295 (ERMQ…KTED). Residues 399-457 (QYGAAGTASSEGQSGQPLGPCSSTQHLVALPGGTQPVHSSPVFPPSQYPNGSTTQQPML) form a disordered region. Polar residues-rich tracts occupy residues 405–424 (TASS…STQH) and 446–456 (YPNGSTTQQPM).

It belongs to the TRIM/RBCC family. In terms of assembly, homodimer. Interacts with SOCS1 (via) SH2 domain and SOCS box. Interacts with HSP90AB1; prevents nucleus translocation of phosphorylated STAT3 and HSP90AB1. Interacts with MAP3K7/TAK1. Interacts with PIAS3. Interacts with TICAM1. Interacts with TRIM15; this interaction prevents TRIM8 cytoplasmic translocation. High expression in heart, liver, and thymus. Expressed in embryonic CNS, kidney, lens and gut.

The catalysed reaction is S-ubiquitinyl-[E2 ubiquitin-conjugating enzyme]-L-cysteine + [acceptor protein]-L-lysine = [E2 ubiquitin-conjugating enzyme]-L-cysteine + N(6)-ubiquitinyl-[acceptor protein]-L-lysine.. Its pathway is protein modification; protein ubiquitination. E3 ubiquitin-protein ligase that participates in multiple biological processes including cell survival, differentiation, apoptosis, and in particular, the innate immune response. Participates in the activation of interferon-gamma signaling by promoting proteasomal degradation of the repressor SOCS1. Plays a positive role in the TNFalpha and IL-1beta signaling pathways. Mechanistically, induces the 'Lys-63'-linked polyubiquitination of MAP3K7/TAK1 component leading to the activation of NF-kappa-B. Also modulates STAT3 activity through negative regulation of PIAS3, either by degradation of PIAS3 through the ubiquitin-proteasome pathway or exclusion of PIAS3 from the nucleus. Negatively regulates TLR3/4-mediated innate immune response by catalyzing 'Lys-6'- and 'Lys-33'-linked polyubiquitination of TICAM1 and thereby disrupting the TICAM1-TBK1 interaction. This is E3 ubiquitin-protein ligase TRIM8 (Trim8) from Mus musculus (Mouse).